Reading from the N-terminus, the 601-residue chain is Glutathione-regulated potassium-efflux system protein KefB (601 aa).

The next 13 membrane-spanning stretches (helical) occupy residues Ala-4–Ala-24, Ile-29–Phe-49, Glu-55–Leu-75, Ile-87–Met-107, Phe-111–Ala-131, Val-152–Gly-172, His-177–Gly-197, Phe-207–Ser-227, Leu-230–Leu-250, Ala-262–Leu-282, Leu-284–Ile-304, Met-324–Ala-344, and Ala-356–Ile-376. The 120-residue stretch at Lys-400–Thr-519 folds into the RCK N-terminal domain.

This sequence belongs to the monovalent cation:proton antiporter 2 (CPA2) transporter (TC 2.A.37) family. KefB subfamily. In terms of assembly, interacts with the regulatory subunit KefG.

Its subcellular location is the cell inner membrane. Its function is as follows. Pore-forming subunit of a potassium efflux system that confers protection against electrophiles. Catalyzes K(+)/H(+) antiport. The sequence is that of Glutathione-regulated potassium-efflux system protein KefB from Salmonella heidelberg (strain SL476).